A 245-amino-acid chain; its full sequence is MKIVISPAKKMQTDGGFLPKSQPVFLDQAEELWSYLHSLDQAGLEKVWRANAKITEEARQMLAADLTQPQLPALFAYSGLQYQYLAADVLDQAGLDYLDQHLRVLSGLYGSLRPFDGIVPYRLEMKSPLPAFKYKSLYEFWGEKVYQELYQDDSVVLNLASKEYSHLLTPFLKEGDRLLEVVFQEEKNGKWRTQATHAKMARGRLVRWLAEGGRDLSDLQGFTDFGYAFAPDQSGEDRVVFRKKA.

The protein belongs to the UPF0246 family.

The polypeptide is UPF0246 protein LBUL_1917 (Lactobacillus delbrueckii subsp. bulgaricus (strain ATCC BAA-365 / Lb-18)).